Consider the following 786-residue polypeptide: Endonuclease MutS2 (786 aa).

332 to 339 (GPNTGGKT) is a binding site for ATP. The region spanning 711–786 (IDLRGMDSEE…GTGVTVVILK (76 aa)) is the Smr domain.

Belongs to the DNA mismatch repair MutS family. MutS2 subfamily. In terms of assembly, homodimer. Binds to stalled ribosomes, contacting rRNA.

In terms of biological role, endonuclease that is involved in the suppression of homologous recombination and thus may have a key role in the control of bacterial genetic diversity. Acts as a ribosome collision sensor, splitting the ribosome into its 2 subunits. Detects stalled/collided 70S ribosomes which it binds and splits by an ATP-hydrolysis driven conformational change. Acts upstream of the ribosome quality control system (RQC), a ribosome-associated complex that mediates the extraction of incompletely synthesized nascent chains from stalled ribosomes and their subsequent degradation. Probably generates substrates for RQC. The sequence is that of Endonuclease MutS2 from Clostridium perfringens (strain ATCC 13124 / DSM 756 / JCM 1290 / NCIMB 6125 / NCTC 8237 / Type A).